The primary structure comprises 142 residues: Large ribosomal subunit protein uL13 (142 aa).

Belongs to the universal ribosomal protein uL13 family. As to quaternary structure, part of the 50S ribosomal subunit.

Functionally, this protein is one of the early assembly proteins of the 50S ribosomal subunit, although it is not seen to bind rRNA by itself. It is important during the early stages of 50S assembly. The protein is Large ribosomal subunit protein uL13 of Shewanella denitrificans (strain OS217 / ATCC BAA-1090 / DSM 15013).